A 310-amino-acid chain; its full sequence is D-alanyl-D-alanine endopeptidase (310 aa).

A signal peptide spans M1–A25. The active-site Acyl-ester intermediate is the S67. Catalysis depends on K70, which acts as the Proton acceptor. The active site involves S124. K231 contributes to the substrate binding site.

The protein belongs to the peptidase S11 family. Post-translationally, pbp8 is a proteolytic product of Pbp7.

It localises to the periplasm. Its function is as follows. Cell wall formation. May play a specialized role in remodeling the cell wall. Specifically hydrolyzes the DD-diaminopimelate-alanine bonds in high-molecular-mass murein sacculi. This is D-alanyl-D-alanine endopeptidase (pbpG) from Escherichia coli (strain K12).